The sequence spans 852 residues: SPS-sensor component SSY1 (852 aa).

Over 1–285 (MSSVNQIYDL…HIQRKLKVRH (285 aa)) the chain is Cytoplasmic. Residues 21–41 (DSHSQEHDTSSSLAKNDTDGT) form a disordered region. Over residues 30-41 (SSSLAKNDTDGT) the composition is skewed to polar residues. A helical membrane pass occupies residues 286-306 (IQMLSIGACFSVGLFLTSGKA). The Extracellular portion of the chain corresponds to 307–329 (FSIAGPFGTLLGFGLTGSIILAT). Residues 330-350 (MLSFTELSTLIPVSSGFSGLA) traverse the membrane as a helical segment. The Cytoplasmic portion of the chain corresponds to 351-357 (SRFVEDA). Residues 358-378 (FGFALGWTYWISCMLALPAQV) traverse the membrane as a helical segment. Residues 379-400 (SSSTFYLSYYNNVNISKGVTAG) are Extracellular-facing. A helical membrane pass occupies residues 401 to 421 (FITLFSAFSIVVNLLDVSIMG). Residue Glu422 is a topological domain, cytoplasmic. Residues 423-443 (IVYVAGISKVIIAILMVFTMI) traverse the membrane as a helical segment. Residues 444-500 (ILNAGHGNDIHEGVGFRYWDSSKSVRNLTYGLYRPTFDLADAGEGSKKGISGPKGRF) lie on the Extracellular side of the membrane. A helical transmembrane segment spans residues 501-521 (LATASVMLISTFAFSGVEMTF). Topologically, residues 522–540 (LASGEAINPRKTIPSATKR) are cytoplasmic. A helical membrane pass occupies residues 541–561 (TFSIVLISYVFLIFSVGINIY). Topologically, residues 562-623 (SGDPRLLSYF…PWVVALQNFG (62 aa)) are extracellular. A helical membrane pass occupies residues 624–644 (LCTFASAFNAILIFFTATAGI). The Cytoplasmic segment spans residues 645 to 673 (SSLFSCSRTLYAMSVQRKAPPVFEICSKR). A helical transmembrane segment spans residues 674–694 (GVPYVSVIFSSLFSVIAYIAV). Over 695–703 (DQTAIENFD) the chain is Extracellular. The helical transmembrane segment at 704–724 (VLANVSSASTSIIWMGLNLSF) threads the bilayer. At 725 to 755 (LRFYYALKQRKDIISRNDSSYPYKSPFQPYL) the chain is on the cytoplasmic side. The helical transmembrane segment at 756 to 776 (AIYGLVGCSLFVIFMGYPNFI) threads the bilayer. The Extracellular segment spans residues 777 to 784 (HHFWSTKA). The helical transmembrane segment at 785 to 805 (FFSAYGGLMFFFISYTAYKVL) threads the bilayer. Residues 806–852 (GTSKIQRLDQLDMDSGRREMDRTDWTEHSQYLGTYRERAKKLVTWLI) are Cytoplasmic-facing.

The protein belongs to the amino acid-polyamine-organocation (APC) superfamily. Component of the plasma membrane SPS (SSY1-PTR3-SSY5) amino acid sensor complex. Interacts directly with PTR3 and SSY5. Interacts with YCK1.

The protein localises to the cell membrane. Amino acid sensor component of the SPS-sensor system, which regulates the expression of several amino acid-metabolizing enzymes and amino acid- and peptide-permeases in response to extracellular amino acid levels by controlling the activity of two transcription factors, STP1 and STP2. Amino-acid permease homolog that seems to interact directly with the extracellular signaling molecules, but has no amino acid transporter activity. May recruit casein kinases YCK1 and YCK2 to hyperphosphorylate and activate downstream component PTR3 in response to amino acid stimulus. This Saccharomyces cerevisiae (strain ATCC 204508 / S288c) (Baker's yeast) protein is SPS-sensor component SSY1 (SSY1).